The chain runs to 501 residues: Bifunctional pantoate ligase/cytidylate kinase (501 aa).

The pantoate--beta-alanine ligase stretch occupies residues 1-264 (MLSTQAELAA…CGTTRLIDHS (264 aa)). ATP is bound at residue 25–32 (MGGLHQGH). Catalysis depends on His32, which acts as the Proton donor. Gln55 contributes to the (R)-pantoate binding site. Gln55 is a binding site for beta-alanine. 144–147 (GEKD) provides a ligand contact to ATP. Residue Gln150 participates in (R)-pantoate binding. Residues Val173 and 181–184 (LSSR) each bind ATP. Residues 265–501 (FLMTRQPLVA…PEEAWPTPAG (237 aa)) form a cytidylate kinase region.

In the N-terminal section; belongs to the pantothenate synthetase family. The protein in the C-terminal section; belongs to the cytidylate kinase family. Type 1 subfamily.

The protein resides in the cytoplasm. It catalyses the reaction (R)-pantoate + beta-alanine + ATP = (R)-pantothenate + AMP + diphosphate + H(+). It carries out the reaction CMP + ATP = CDP + ADP. The catalysed reaction is dCMP + ATP = dCDP + ADP. The protein operates within cofactor biosynthesis; (R)-pantothenate biosynthesis; (R)-pantothenate from (R)-pantoate and beta-alanine: step 1/1. In terms of biological role, catalyzes the condensation of pantoate with beta-alanine in an ATP-dependent reaction via a pantoyl-adenylate intermediate. Functionally, catalyzes the transfer of a phosphate group from ATP to either CMP or dCMP to form CDP or dCDP and ADP, respectively. This is Bifunctional pantoate ligase/cytidylate kinase from Parasynechococcus marenigrum (strain WH8102).